The following is a 634-amino-acid chain: Probable beta-glucosidase C (634 aa).

A signal peptide spans M1–A19. Residues N90, N112, N219, and N270 are each glycosylated (N-linked (GlcNAc...) asparagine). The active site involves D337. Residues N360, N476, N484, and N524 are each glycosylated (N-linked (GlcNAc...) asparagine).

It belongs to the glycosyl hydrolase 3 family.

It localises to the secreted. The enzyme catalyses Hydrolysis of terminal, non-reducing beta-D-glucosyl residues with release of beta-D-glucose.. It functions in the pathway glycan metabolism; cellulose degradation. Beta-glucosidases are one of a number of cellulolytic enzymes involved in the degradation of cellulosic biomass. Catalyzes the last step releasing glucose from the inhibitory cellobiose. This chain is Probable beta-glucosidase C (bglC), found in Aspergillus flavus (strain ATCC 200026 / FGSC A1120 / IAM 13836 / NRRL 3357 / JCM 12722 / SRRC 167).